The following is a 94-amino-acid chain: CRISPR-associated endoribonuclease Cas2 1 (94 aa).

Mg(2+) is bound at residue aspartate 8.

It belongs to the CRISPR-associated endoribonuclease Cas2 protein family. Homodimer, forms a heterotetramer with a Cas1 homodimer. Requires Mg(2+) as cofactor.

Functionally, CRISPR (clustered regularly interspaced short palindromic repeat), is an adaptive immune system that provides protection against mobile genetic elements (viruses, transposable elements and conjugative plasmids). CRISPR clusters contain sequences complementary to antecedent mobile elements and target invading nucleic acids. CRISPR clusters are transcribed and processed into CRISPR RNA (crRNA). Functions as a ssRNA-specific endoribonuclease. Involved in the integration of spacer DNA into the CRISPR cassette. This is CRISPR-associated endoribonuclease Cas2 1 from Synechocystis sp. (strain ATCC 27184 / PCC 6803 / Kazusa).